The chain runs to 111 residues: MEQNKDPQMISKHSSRLPIWVLSPREEQQARKNLKTETYKKCANFVQAMADCAKANGMKVFPTCDKQRDEMKSCLLFYQTDEKYLDGERDKIVLEKINKLEKLCQKQSSTK.

The CHCH domain occupies 39–82 (YKKCANFVQAMADCAKANGMKVFPTCDKQRDEMKSCLLFYQTDE). 2 consecutive short sequence motifs (cx9C motif) follow at residues 42-52 (CANFVQAMADC) and 64-74 (CDKQRDEMKSC). 2 cysteine pairs are disulfide-bonded: Cys-42-Cys-74 and Cys-52-Cys-64.

The protein belongs to the CMC family.

Its subcellular location is the mitochondrion inner membrane. In terms of biological role, required for mitochondrial cytochrome c oxidase (COX) assembly and respiration. Binds copper. May be involved in copper trafficking and distribution to mitochondrial COX and SOD1. In Saccharomyces cerevisiae (strain YJM789) (Baker's yeast), this protein is COX assembly mitochondrial protein (CMC1).